The following is a 442-amino-acid chain: HTH-type transcriptional regulator NorG (442 aa).

The 45-residue stretch at 2–46 (KIPSQRQLAIQYNVNRVTIIKSIELLEAEGFIYTKVGSGTYVNDY) folds into the HTH gntR-type domain. Positions 6 to 25 (QRQLAIQYNVNRVTIIKSIE) form a DNA-binding region, H-T-H motif. The residue at position 288 (lysine 288) is an N6-(pyridoxal phosphate)lysine.

The protein in the C-terminal section; belongs to the class-I pyridoxal-phosphate-dependent aminotransferase family. It depends on pyridoxal 5'-phosphate as a cofactor.

Its function is as follows. Positively regulates the expression of the NorB efflux pump and negatively regulates the expression of the AbcA efflux pump. Binds specifically to the promoters of norA, norB and norC and abcA genes. Could also have an aminotransferase activity. The sequence is that of HTH-type transcriptional regulator NorG (norG) from Staphylococcus aureus (strain bovine RF122 / ET3-1).